A 458-amino-acid polypeptide reads, in one-letter code: Retinoic acid receptor alpha (458 aa).

Residues Met-1 to Pro-87 are modulating. The segment at Gly-39–Pro-78 is disordered. Over residues Gly-52–Glu-69 the composition is skewed to polar residues. 2 consecutive NR C4-type zinc fingers follow at residues Cys-88 to Cys-108 and Cys-124 to Cys-148. The nuclear receptor DNA-binding region spans Cys-88–Met-153. A hinge region spans residues Ser-154–Pro-182. The 235-residue stretch at Glu-183–Glu-417 folds into the NR LBD domain. A 9aaTAD motif is present at residues Pro-407–Asn-415. The interval Leu-419–Pro-458 is disordered. A compositionally biased stretch (low complexity) spans Ser-439 to Pro-458.

This sequence belongs to the nuclear hormone receptor family. NR1 subfamily. In terms of assembly, heterodimer; with an rxr molecule. Binds DNA preferentially as a rar/rxr heterodimer.

It is found in the nucleus. Its function is as follows. Receptor for retinoic acid. Retinoic acid receptors bind as heterodimers to their target response elements in response to their ligands, all-trans or 9-cis retinoic acid, and regulate gene expression in various biological processes. The rar/rxr heterodimers bind to the retinoic acid response elements (RARE) composed of tandem 5'-AGGTCA-3' sites known as DR1-DR5. Required for primary neurogenesis and for anteroposterior neural patterning. This Xenopus laevis (African clawed frog) protein is Retinoic acid receptor alpha (rara).